Here is a 344-residue protein sequence, read N- to C-terminus: DNA-directed RNA polymerase subunit alpha (344 aa).

An alpha N-terminal domain (alpha-NTD) region spans residues 1 to 239 (MADHWNKLTR…DQLQSFISFD (239 aa)). Residues 254–344 (VLPYDHNLLR…ENLSKQYSED (91 aa)) form an alpha C-terminal domain (alpha-CTD) region.

The protein belongs to the RNA polymerase alpha chain family. In terms of assembly, homodimer. The RNAP catalytic core consists of 2 alpha, 1 beta, 1 beta' and 1 omega subunit. When a sigma factor is associated with the core the holoenzyme is formed, which can initiate transcription.

The catalysed reaction is RNA(n) + a ribonucleoside 5'-triphosphate = RNA(n+1) + diphosphate. DNA-dependent RNA polymerase catalyzes the transcription of DNA into RNA using the four ribonucleoside triphosphates as substrates. This is DNA-directed RNA polymerase subunit alpha from Anaplasma phagocytophilum (strain HZ).